Reading from the N-terminus, the 335-residue chain is Transcriptional adapter 1 (335 aa).

The protein belongs to the TADA1 family. As to quaternary structure, component of the STAGA transcription coactivator-HAT complex, at least composed of SUPT3H, GCN5L2, TAF5L, TAF6L, SUPT7L, TADA3L, TAD1L, TAF10, TAF12, TRRAP and TAF9.

The protein localises to the nucleus. Functionally, probably involved in transcriptional regulation. The chain is Transcriptional adapter 1 (TADA1) from Bos taurus (Bovine).